A 188-amino-acid chain; its full sequence is Elongation factor P (188 aa).

Lys34 carries the post-translational modification N6-(3,6-diaminohexanoyl)-5-hydroxylysine.

It belongs to the elongation factor P family. Post-translationally, may be beta-lysylated on the epsilon-amino group of Lys-34 by the combined action of EpmA and EpmB, and then hydroxylated on the C5 position of the same residue by EpmC (if this protein is present). Lysylation is critical for the stimulatory effect of EF-P on peptide-bond formation. The lysylation moiety may extend toward the peptidyltransferase center and stabilize the terminal 3-CCA end of the tRNA. Hydroxylation of the C5 position on Lys-34 may allow additional potential stabilizing hydrogen-bond interactions with the P-tRNA.

The protein resides in the cytoplasm. It participates in protein biosynthesis; polypeptide chain elongation. Involved in peptide bond synthesis. Alleviates ribosome stalling that occurs when 3 or more consecutive Pro residues or the sequence PPG is present in a protein, possibly by augmenting the peptidyl transferase activity of the ribosome. Modification of Lys-34 is required for alleviation. In Vibrio cholerae serotype O1 (strain ATCC 39541 / Classical Ogawa 395 / O395), this protein is Elongation factor P.